We begin with the raw amino-acid sequence, 517 residues long: Light-independent protochlorophyllide reductase subunit B (517 aa).

Asp-36 provides a ligand contact to [4Fe-4S] cluster. Residue Asp-285 is the Proton donor of the active site. 420 to 421 is a binding site for substrate; sequence GL.

It belongs to the ChlB/BchB/BchZ family. Protochlorophyllide reductase is composed of three subunits; BchL, BchN and BchB. Forms a heterotetramer of two BchB and two BchN subunits. [4Fe-4S] cluster serves as cofactor.

The enzyme catalyses chlorophyllide a + oxidized 2[4Fe-4S]-[ferredoxin] + 2 ADP + 2 phosphate = protochlorophyllide a + reduced 2[4Fe-4S]-[ferredoxin] + 2 ATP + 2 H2O. Its pathway is porphyrin-containing compound metabolism; bacteriochlorophyll biosynthesis (light-independent). In terms of biological role, component of the dark-operative protochlorophyllide reductase (DPOR) that uses Mg-ATP and reduced ferredoxin to reduce ring D of protochlorophyllide (Pchlide) to form chlorophyllide a (Chlide). This reaction is light-independent. The NB-protein (BchN-BchB) is the catalytic component of the complex. This chain is Light-independent protochlorophyllide reductase subunit B, found in Bradyrhizobium sp. (strain BTAi1 / ATCC BAA-1182).